A 226-amino-acid polypeptide reads, in one-letter code: Ribonuclease T (226 aa).

The region spanning 20–194 (VVIDVETAGF…YDTERTAELF (175 aa)) is the Exonuclease domain. D23, E25, H181, and D186 together coordinate Mg(2+). H181 acts as the Proton donor/acceptor in catalysis.

The protein belongs to the RNase T family. As to quaternary structure, homodimer. It depends on Mg(2+) as a cofactor.

Functionally, trims short 3' overhangs of a variety of RNA species, leaving a one or two nucleotide 3' overhang. Responsible for the end-turnover of tRNA: specifically removes the terminal AMP residue from uncharged tRNA (tRNA-C-C-A). Also appears to be involved in tRNA biosynthesis. The protein is Ribonuclease T of Shewanella denitrificans (strain OS217 / ATCC BAA-1090 / DSM 15013).